The primary structure comprises 458 residues: UDP-N-acetylglucosamine 1-carboxyvinyltransferase (458 aa).

34-35 (KN) contacts phosphoenolpyruvate. Residue Arg-104 coordinates UDP-N-acetyl-alpha-D-glucosamine. Cys-128 functions as the Proton donor in the catalytic mechanism. Cys-128 carries the 2-(S-cysteinyl)pyruvic acid O-phosphothioketal modification. UDP-N-acetyl-alpha-D-glucosamine-binding residues include Asp-320 and Val-342.

Belongs to the EPSP synthase family. MurA subfamily.

It is found in the cytoplasm. The catalysed reaction is phosphoenolpyruvate + UDP-N-acetyl-alpha-D-glucosamine = UDP-N-acetyl-3-O-(1-carboxyvinyl)-alpha-D-glucosamine + phosphate. The protein operates within cell wall biogenesis; peptidoglycan biosynthesis. Functionally, cell wall formation. Adds enolpyruvyl to UDP-N-acetylglucosamine. This Prochlorococcus marinus (strain NATL1A) protein is UDP-N-acetylglucosamine 1-carboxyvinyltransferase.